Reading from the N-terminus, the 470-residue chain is Cysteine--tRNA ligase (470 aa).

Cys28 contributes to the Zn(2+) binding site. Residues 30–40 carry the 'HIGH' region motif; that stretch reads PTVYNYIHIGN. Zn(2+) is bound by residues Cys212, His237, and Glu241. Positions 271–275 match the 'KMSKS' region motif; that stretch reads KMSKS. Lys274 serves as a coordination point for ATP.

Belongs to the class-I aminoacyl-tRNA synthetase family. In terms of assembly, monomer. Zn(2+) serves as cofactor.

The protein resides in the cytoplasm. The catalysed reaction is tRNA(Cys) + L-cysteine + ATP = L-cysteinyl-tRNA(Cys) + AMP + diphosphate. This is Cysteine--tRNA ligase from Levilactobacillus brevis (strain ATCC 367 / BCRC 12310 / CIP 105137 / JCM 1170 / LMG 11437 / NCIMB 947 / NCTC 947) (Lactobacillus brevis).